We begin with the raw amino-acid sequence, 163 residues long: Phosphopantetheine adenylyltransferase (163 aa).

Residue Ser-9 participates in substrate binding. ATP contacts are provided by residues 9 to 10 (SF) and His-17. Substrate-binding residues include Lys-41, Ile-75, and Arg-89. ATP contacts are provided by residues 90-92 (GIR), Glu-100, and 125-131 (HLYVRSD).

The protein belongs to the bacterial CoaD family. As to quaternary structure, homohexamer. It depends on Mg(2+) as a cofactor.

It localises to the cytoplasm. The catalysed reaction is (R)-4'-phosphopantetheine + ATP + H(+) = 3'-dephospho-CoA + diphosphate. The protein operates within cofactor biosynthesis; coenzyme A biosynthesis; CoA from (R)-pantothenate: step 4/5. Functionally, reversibly transfers an adenylyl group from ATP to 4'-phosphopantetheine, yielding dephospho-CoA (dPCoA) and pyrophosphate. The chain is Phosphopantetheine adenylyltransferase from Borrelia garinii subsp. bavariensis (strain ATCC BAA-2496 / DSM 23469 / PBi) (Borreliella bavariensis).